Here is a 100-residue protein sequence, read N- to C-terminus: Apolipoprotein C-II (100 aa).

A signal peptide spans 1 to 22 (MSSQFLLAFFLVLLVLGYEVQG). Residues 66 to 74 (SVDEKLRDM) are lipid binding. The interval 78–100 (SSAAMSTYAGIFTDQLFTLLKGE) is lipoprotein lipase cofactor.

The protein belongs to the apolipoprotein C2 family. Proapolipoprotein C-II is synthesized as a sialic acid containing glycoprotein which is subsequently desialylated prior to its proteolytic processing. Post-translationally, proapolipoprotein C-II, the major form found in plasma undergoes proteolytic cleavage of its N-terminal hexapeptide to generate the mature form apolipoprotein C-II, which occurs as the minor form in plasma.

It localises to the secreted. Component of chylomicrons, very low-density lipoproteins (VLDL), low-density lipoproteins (LDL), and high-density lipoproteins (HDL) in plasma. Plays an important role in lipoprotein metabolism as an activator of lipoprotein lipase. The sequence is that of Apolipoprotein C-II (APOC2) from Cricetulus griseus (Chinese hamster).